Here is a 366-residue protein sequence, read N- to C-terminus: tRNA/tmRNA (uracil-C(5))-methyltransferase (366 aa).

5 residues coordinate S-adenosyl-L-methionine: Q189, Y217, N222, E238, and D298. Residue C323 is the Nucleophile of the active site. Residue E357 is the Proton acceptor of the active site.

Belongs to the class I-like SAM-binding methyltransferase superfamily. RNA M5U methyltransferase family. TrmA subfamily.

The catalysed reaction is uridine(54) in tRNA + S-adenosyl-L-methionine = 5-methyluridine(54) in tRNA + S-adenosyl-L-homocysteine + H(+). It catalyses the reaction uridine(341) in tmRNA + S-adenosyl-L-methionine = 5-methyluridine(341) in tmRNA + S-adenosyl-L-homocysteine + H(+). Dual-specificity methyltransferase that catalyzes the formation of 5-methyluridine at position 54 (m5U54) in all tRNAs, and that of position 341 (m5U341) in tmRNA (transfer-mRNA). This is tRNA/tmRNA (uracil-C(5))-methyltransferase from Shewanella oneidensis (strain ATCC 700550 / JCM 31522 / CIP 106686 / LMG 19005 / NCIMB 14063 / MR-1).